A 1941-amino-acid chain; its full sequence is Myosin-7B (1941 aa).

A Myosin N-terminal SH3-like domain is found at 30–80 (DGKKRVWVPDEQDAYVEAEVKTEATGGKVTVETKDQKVLTVRETEMQPMNP). The Myosin motor domain maps to 84–785 (DLLEDMAMMT…LLGILEELRD (702 aa)). 177-184 (GESGAGKT) is a binding site for ATP. Actin-binding regions lie at residues 662–684 (LNKL…VPNE) and 764–778 (QFGH…GLLG). In terms of domain architecture, IQ spans 788 to 817 (LAKVLTLLQARSRGRLMRLEYQRMLGGRDA). The stretch at 846-1935 (LLRSAQAEEE…KLRARSRDAL (1090 aa)) forms a coiled coil. Positions 1887–1941 (RQFEEAEQQASTNLAKYRKAQHELDDAEERADMAETQANKLRARSRDALGPKHKE) are disordered. Residues 1930–1941 (RSRDALGPKHKE) are compositionally biased toward basic and acidic residues.

Belongs to the TRAFAC class myosin-kinesin ATPase superfamily. Myosin family. Muscle myosin is a hexameric protein that consists of 2 heavy chain subunits (MHC), 2 alkali light chain subunits (MLC) and 2 regulatory light chain subunits (MLC-2).

It localises to the membrane. Its function is as follows. Involved in muscle contraction. The polypeptide is Myosin-7B (Myh7b) (Mus musculus (Mouse)).